The following is a 149-amino-acid chain: Calmodulin (149 aa).

Alanine 2 is subject to N-acetylalanine. 4 EF-hand domains span residues 8–43 (EQIA…LGQN), 44–79 (PTEA…KMKD), 81–116 (DSEE…LGEK), and 117–149 (LTDE…MTNK). Ca(2+) contacts are provided by aspartate 21, aspartate 23, aspartate 25, threonine 27, glutamate 32, aspartate 57, aspartate 59, asparagine 61, threonine 63, glutamate 68, aspartate 94, aspartate 96, asparagine 98, and glutamate 105. Residue lysine 116 is modified to N6,N6,N6-trimethyllysine. Residues aspartate 130, aspartate 132, aspartate 134, glutamine 136, and glutamate 141 each coordinate Ca(2+).

Belongs to the calmodulin family.

Its function is as follows. Calmodulin mediates the control of a large number of enzymes, ion channels and other proteins by Ca(2+). Among the enzymes to be stimulated by the calmodulin-Ca(2+) complex are a number of protein kinases and phosphatases. This chain is Calmodulin, found in Ciona intestinalis (Transparent sea squirt).